Here is a 119-residue protein sequence, read N- to C-terminus: Ribonuclease P protein component (119 aa).

It belongs to the RnpA family. Consists of a catalytic RNA component (M1 or rnpB) and a protein subunit.

It carries out the reaction Endonucleolytic cleavage of RNA, removing 5'-extranucleotides from tRNA precursor.. Its function is as follows. RNaseP catalyzes the removal of the 5'-leader sequence from pre-tRNA to produce the mature 5'-terminus. It can also cleave other RNA substrates such as 4.5S RNA. The protein component plays an auxiliary but essential role in vivo by binding to the 5'-leader sequence and broadening the substrate specificity of the ribozyme. In Escherichia coli O157:H7, this protein is Ribonuclease P protein component.